The primary structure comprises 191 residues: Protein Ves (191 aa).

Belongs to the Ves family.

The sequence is that of Protein Ves from Escherichia coli O139:H28 (strain E24377A / ETEC).